The following is an 863-amino-acid chain: MICAL-like protein 1 (863 aa).

Residues 2-108 (AGPRGALLAW…YVSQYYNHFC (107 aa)) enclose the Calponin-homology (CH) domain. Disordered stretches follow at residues 119–162 (RKGL…TPSS) and 224–670 (GTRS…PLIK). Over residues 125 to 135 (CSPPSVAPTPV) the composition is skewed to pro residues. Low complexity-rich tracts occupy residues 143–159 (GEELSSGSLSEQGTGQT) and 224–244 (GTRSGTRPGPFSQPKQQHQQQ). Positions 162–225 (STCAACQQHV…EHCARLGPGT (64 aa)) constitute an LIM zinc-binding domain. Phosphoserine is present on residues S295 and S309. T318 is modified (phosphothreonine). Over residues 325 to 340 (LQQENLVEQAGSSSLV) the composition is skewed to polar residues. Pro residues predominate over residues 384-395 (APLPPSSSPGPP). At S391 the chain carries Phosphoserine. An NPF1 motif is present at residues 425 to 427 (NPF). A compositionally biased stretch (acidic residues) spans 427 to 438 (FEEEEEDKEEEA). Residues 439 to 450 (PAAPSLATSPAL) show a composition bias toward low complexity. Phosphothreonine occurs at positions 467 and 469. S470, S471, S484, and S486 each carry phosphoserine. Composition is skewed to low complexity over residues 482 to 495 (APSASPLALHASRL), 505 to 520 (PSPALSVESLSSESAS), and 553 to 566 (SLSTNSSLASSGEL). Phosphoserine occurs at positions 578 and 621. Positions 633–635 (NPF) match the NPF2 motif. A compositionally biased stretch (low complexity) spans 638 to 656 (KPSPAASPATKKATKGSKP). The segment at 652-863 (KGSKPVRPPA…AKSKSPRDKS (212 aa)) is mediates the interaction with RAB13 and RAB35 and intramolecular interaction with the CH domain. The bMERB domain occupies 671 to 818 (RKVQADQYIP…EEEEDKMLEA (148 aa)). The stretch at 682–711 (EDIHGEMDTIERRLDALEHRGVLLEEKLRG) forms a coiled coil. The tract at residues 700–863 (HRGVLLEEKL…AKSKSPRDKS (164 aa)) is necessary and sufficient to associate with tubular recycling endosome membranes, mediate phosphatidic acid-binding and membrane tubulation. S740 carries the phosphoserine modification. A coiled-coil region spans residues 785-830 (MQELVTLIEQRNAIINCLDEDRQREEEEDKMLEAMIKKKEFQREAE).

As to quaternary structure, homooligomer. Interacts (via NPF1 motif) with EHD1 (via EH domain); the interaction is direct and probably recruits EHD1 to membranes. Interacts with EHD3 (via EH domain). Interacts with RAB35 (GTP-bound form); the interaction is direct and probably recruits MICALL1 to membranes. Interacts with ACAP2; the interaction is indirect through RAB35. Interacts with RAB8A (GTP-bound form); regulates RAB8A association with recycling endosomes. Interacts with RAB13 (GTP-bound form). Interacts with ARF6 (GTP-bound form). Interacts with PACSIN2 (via the SH3 domain). Interacts with DPYSL2.

Its subcellular location is the recycling endosome membrane. It is found in the late endosome membrane. The protein localises to the cell projection. It localises to the cilium membrane. The protein resides in the cytoplasm. Its subcellular location is the cytoskeleton. It is found in the microtubule organizing center. The protein localises to the centrosome. It localises to the centriole. Its function is as follows. Lipid-binding protein with higher affinity for phosphatidic acid, a lipid enriched in recycling endosome membranes. On endosome membranes, acts as a downstream effector of Rab proteins recruiting cytosolic proteins to regulate membrane tubulation. Involved in a late step of receptor-mediated endocytosis regulating for instance endocytosed-EGF receptor trafficking. Alternatively, regulates slow endocytic recycling of endocytosed proteins back to the plasma membrane. Also involved in cargo protein delivery to the plasma membrane. Plays a role in ciliogenesis coordination, recruits EHD1 to primary cilium where it is anchored to the centriole through interaction with tubulins. May indirectly play a role in neurite outgrowth. In Homo sapiens (Human), this protein is MICAL-like protein 1 (MICALL1).